The chain runs to 288 residues: 2-hydroxy-6-oxononadienedioate/2-hydroxy-6-oxononatrienedioate hydrolase (288 aa).

The Proton acceptor role is filled by H267.

It belongs to the AB hydrolase superfamily. MhpC family. In terms of assembly, homodimer.

The catalysed reaction is (2Z,4E)-2-hydroxy-6-oxonona-2,4-dienedioate + H2O = (2Z)-2-hydroxypenta-2,4-dienoate + succinate + H(+). It carries out the reaction (2Z,4E,7E)-2-hydroxy-6-oxonona-2,4,7-trienedioate + H2O = (2Z)-2-hydroxypenta-2,4-dienoate + fumarate + H(+). It participates in aromatic compound metabolism; 3-phenylpropanoate degradation. In terms of biological role, catalyzes the cleavage of the C5-C6 bond of 2-hydroxy-6-oxononadienedioate and 2-hydroxy-6-oxononatrienedioate, a dienol ring fission product of the bacterial meta-cleavage pathway for degradation of phenylpropionic acid. This is 2-hydroxy-6-oxononadienedioate/2-hydroxy-6-oxononatrienedioate hydrolase from Escherichia coli O81 (strain ED1a).